Reading from the N-terminus, the 389-residue chain is Stilbene synthase 3 (389 aa).

55-58 (KFQR) is a binding site for substrate. Residue cysteine 164 is part of the active site. Substrate-binding positions include leucine 267 and 305–307 (GGR).

This sequence belongs to the thiolase-like superfamily. Chalcone/stilbene synthases family. As to quaternary structure, homodimer.

It is found in the cytoplasm. The catalysed reaction is 4-coumaroyl-CoA + 3 malonyl-CoA + 3 H(+) = trans-resveratrol + 4 CO2 + 4 CoA. Its pathway is phytoalexin biosynthesis; 3,4',5-trihydroxystilbene biosynthesis; 3,4',5-trihydroxystilbene from trans-4-coumarate: step 2/2. This Arachis hypogaea (Peanut) protein is Stilbene synthase 3.